The following is a 180-amino-acid chain: NADH-quinone oxidoreductase subunit I (180 aa).

2 consecutive 4Fe-4S ferredoxin-type domains span residues Leu50 to Ser80 and Lys90 to Asp119. [4Fe-4S] cluster contacts are provided by Cys60, Cys63, Cys66, Cys70, Cys99, Cys102, Cys105, and Cys109.

It belongs to the complex I 23 kDa subunit family. In terms of assembly, NDH-1 is composed of 13 different subunits. Subunits NuoA, H, J, K, L, M, N constitute the membrane sector of the complex. [4Fe-4S] cluster serves as cofactor.

It is found in the cell membrane. It catalyses the reaction a quinone + NADH + 5 H(+)(in) = a quinol + NAD(+) + 4 H(+)(out). In terms of biological role, NDH-1 shuttles electrons from NADH, via FMN and iron-sulfur (Fe-S) centers, to quinones in the respiratory chain. The immediate electron acceptor for the enzyme in this species is believed to be ubiquinone. Couples the redox reaction to proton translocation (for every two electrons transferred, four hydrogen ions are translocated across the cytoplasmic membrane), and thus conserves the redox energy in a proton gradient. The sequence is that of NADH-quinone oxidoreductase subunit I from Buchnera aphidicola subsp. Schizaphis graminum (strain Sg).